The sequence spans 467 residues: E3 ubiquitin-protein ligase TRIM11 (467 aa).

Residues 16–57 (CAICLDYFTDPVMTDCGHNFCRECIRRCWGQPEGPYACPECR) form an RING-type zinc finger. Ser85 bears the Phosphoserine mark. The B box-type zinc finger occupies 87–127 (VPQGVCAAHREPLTTFCGDDLSLLCPTCERSEHWAHRVRPL). Cys92, His95, Cys114, and His119 together coordinate Zn(2+). The stretch at 127–207 (LQEAADDLKG…KLEEEELEVL (81 aa)) forms a coiled coil. A B30.2/SPRY domain is found at 267 to 460 (ELRTVCRVPG…MTICRLIGVS (194 aa)). Residues 304 to 313 (DRRSVQRGEQ) show a composition bias toward basic and acidic residues. The tract at residues 304-325 (DRRSVQRGEQRQALPDSPERFD) is disordered.

It belongs to the TRIM/RBCC family. As to quaternary structure, binds cytoplasmic tail of integrin alpha-1. Interacts with the HN peptide. Interacts with PHOX2B. Interacts (when autoubiquitinated) with SQSTM1/p62; promoting AIM2 recruitment to autophagosomes. Interacts with AIM2; promoting its autophagy-dependent degradation. Post-translationally, autoubiquitinated upon DNA stimulation; autoubiquitination promotes interaction with SQSTM1/p62 and recruitment of AIM2 to autophagosomes.

The protein resides in the cytoplasm. The protein localises to the nucleus. The enzyme catalyses S-ubiquitinyl-[E2 ubiquitin-conjugating enzyme]-L-cysteine + [acceptor protein]-L-lysine = [E2 ubiquitin-conjugating enzyme]-L-cysteine + N(6)-ubiquitinyl-[acceptor protein]-L-lysine.. It participates in protein modification; protein ubiquitination. In terms of biological role, E3 ubiquitin-protein ligase that promotes the degradation of insoluble ubiquitinated proteins, including insoluble PAX6, poly-Gln repeat expanded HTT and poly-Ala repeat expanded ARX. Mediates PAX6 ubiquitination leading to proteasomal degradation, thereby modulating cortical neurogenesis. May also inhibit PAX6 transcriptional activity, possibly in part by preventing the binding of PAX6 to its consensus sequences. May contribute to the regulation of the intracellular level of HN (humanin) or HN-containing proteins through the proteasomal degradation pathway. Mediates MED15 ubiquitination leading to proteasomal degradation. May contribute to the innate restriction of retroviruses. Upon overexpression, reduces HIV-1 and murine leukemia virus infectivity, by suppressing viral gene expression. Antiviral activity depends on a functional E3 ubiquitin-protein ligase domain. May regulate TRIM5 turnover via the proteasome pathway, thus counteracting the TRIM5-mediated cross-species restriction of retroviral infection at early stages of the retroviral life cycle. Acts as an inhibitor of the AIM2 inflammasome by promoting autophagy-dependent degradation of AIM2. Mechanistically, undergoes autoubiquitination upon DNA stimulation, promoting interaction with AIM2 and SQSTM1/p62, leading to AIM2 recruitment to autophagosomes. This chain is E3 ubiquitin-protein ligase TRIM11 (Trim11), found in Rattus norvegicus (Rat).